The sequence spans 331 residues: Glycerol-3-phosphate dehydrogenase [NAD(P)+] (331 aa).

NADPH contacts are provided by Trp-11 and Lys-101. Sn-glycerol 3-phosphate-binding residues include Lys-101, Gly-132, and Ser-134. Residue Ala-136 coordinates NADPH. 5 residues coordinate sn-glycerol 3-phosphate: Lys-188, Asp-241, Ser-251, Arg-252, and Asn-253. The active-site Proton acceptor is the Lys-188. NADPH is bound at residue Arg-252. Glu-278 is an NADPH binding site.

It belongs to the NAD-dependent glycerol-3-phosphate dehydrogenase family.

Its subcellular location is the cytoplasm. The enzyme catalyses sn-glycerol 3-phosphate + NAD(+) = dihydroxyacetone phosphate + NADH + H(+). It catalyses the reaction sn-glycerol 3-phosphate + NADP(+) = dihydroxyacetone phosphate + NADPH + H(+). Its pathway is membrane lipid metabolism; glycerophospholipid metabolism. In terms of biological role, catalyzes the reduction of the glycolytic intermediate dihydroxyacetone phosphate (DHAP) to sn-glycerol 3-phosphate (G3P), the key precursor for phospholipid synthesis. In Phytoplasma mali (strain AT), this protein is Glycerol-3-phosphate dehydrogenase [NAD(P)+].